The primary structure comprises 305 residues: Putative HTH-type transcriptional regulatory protein Saci_1344 (305 aa).

One can recognise an HTH cro/C1-type domain in the interval 128–183 (LREKREEKNMSLGELSQRLGVSRISVYDYEKEDSYVSIEVAEKLIEIFGDEVIGDI). The segment at residues 139 to 158 (LGELSQRLGVSRISVYDYEK) is a DNA-binding region (H-T-H motif).

The polypeptide is Putative HTH-type transcriptional regulatory protein Saci_1344 (Sulfolobus acidocaldarius (strain ATCC 33909 / DSM 639 / JCM 8929 / NBRC 15157 / NCIMB 11770)).